A 365-amino-acid polypeptide reads, in one-letter code: Putrescine carbamoyltransferase (365 aa).

Residues 54–58 (STRTR), Arg105, and His132 each bind carbamoyl phosphate. 277–280 (HCLP) provides a ligand contact to putrescine.

The protein belongs to the aspartate/ornithine carbamoyltransferase superfamily. PTCase family. Homotrimer.

The protein resides in the cytoplasm. The catalysed reaction is carbamoyl phosphate + putrescine = N-carbamoylputrescine + phosphate + H(+). It participates in amine and polyamine biosynthesis; putrescine biosynthesis via agmatine pathway; putrescine from N-carbamoylputrescine (transferase route): step 1/1. Catalyzes the phosphorolysis of N-carbamoylputrescine to form carbamoyl phosphate and putrescine. Is involved in the degradation pathway of the polyamine agmatine. The sequence is that of Putrescine carbamoyltransferase from Mycoplasma capricolum subsp. capricolum (strain California kid / ATCC 27343 / NCTC 10154).